A 355-amino-acid polypeptide reads, in one-letter code: Tyrosine recombinase XerC (355 aa).

The 86-residue stretch at 4–89 (TQFDGDIDSF…AVRGFFAWAY (86 aa)) folds into the Core-binding (CB) domain. Residues 138-180 (DDGGAAAASGSGKAAGKTADKSADTVNRSEAPARADKRDNARV) form a disordered region. Residues 141–154 (GAAAASGSGKAAGK) are compositionally biased toward low complexity. The region spanning 158 to 349 (KSADTVNRSE…SIEQLKNRYG (192 aa)) is the Tyr recombinase domain. A compositionally biased stretch (basic and acidic residues) spans 168–178 (APARADKRDNA). Active-site residues include Arg200, Lys224, His301, Arg304, and His327. Tyr336 serves as the catalytic O-(3'-phospho-DNA)-tyrosine intermediate.

The protein belongs to the 'phage' integrase family. XerC subfamily. Forms a cyclic heterotetrameric complex composed of two molecules of XerC and two molecules of XerD.

The protein resides in the cytoplasm. Site-specific tyrosine recombinase, which acts by catalyzing the cutting and rejoining of the recombining DNA molecules. The XerC-XerD complex is essential to convert dimers of the bacterial chromosome into monomers to permit their segregation at cell division. It also contributes to the segregational stability of plasmids. The sequence is that of Tyrosine recombinase XerC from Bifidobacterium longum subsp. infantis (strain ATCC 15697 / DSM 20088 / JCM 1222 / NCTC 11817 / S12).